Consider the following 507-residue polypeptide: UDP-N-acetylhexosamine pyrophosphorylase-like protein 1 (507 aa).

The tract at residues 56–91 is disordered; that stretch reads ACARPHGPPPDLAARLRPLPPERVGRASRSDPETRR. Residues 78–91 show a composition bias toward basic and acidic residues; it reads RVGRASRSDPETRR. The short motif at 111-114 is the Substrate binding element; the sequence is LAGG. UTP contacts are provided by residues 111–114, Lys-125, Gln-199, and Gly-225; that span reads LAGG. Substrate is bound at residue Asn-226. UTP is bound at residue Asp-256. Residues 306 to 307 carry the Substrate binding motif; sequence EY. Position 380 (Lys-380) interacts with UTP. Position 410 (Lys-410) interacts with substrate.

Belongs to the UDPGP type 1 family.

The polypeptide is UDP-N-acetylhexosamine pyrophosphorylase-like protein 1 (UAP1L1) (Homo sapiens (Human)).